The primary structure comprises 239 residues: Probable phosphatase Csac_1188 (239 aa).

Zn(2+)-binding residues include H8, H10, H16, H41, E74, H102, H132, D192, and H194.

This sequence belongs to the PHP family. Zn(2+) serves as cofactor.

This Caldicellulosiruptor saccharolyticus (strain ATCC 43494 / DSM 8903 / Tp8T 6331) protein is Probable phosphatase Csac_1188.